A 218-amino-acid polypeptide reads, in one-letter code: Ribonuclease S-7 (218 aa).

A signal peptide spans 1–22 (MLNSPLTSVLFVLLFVLSPIYG). Residue glutamine 32 coordinates RNA. Residues cysteine 38 and cysteine 43 are joined by a disulfide bond. N-linked (GlcNAc...) asparagine glycosylation is present at asparagine 49. Histidine 53 contacts RNA. The active-site Proton donor is histidine 53. A glycan (N-linked (GlcNAc...) asparagine) is linked at asparagine 59. Cysteine 67 and cysteine 116 are disulfide-bonded. RNA contacts are provided by residues 91 to 92 (DL), phenylalanine 105, 108 to 109 (HE), and 112 to 113 (KH). Glutamate 109 is a catalytic residue. The active-site Proton acceptor is the histidine 113. Asparagine 162 is a glycosylation site (N-linked (GlcNAc...) asparagine). 2 disulfides stabilise this stretch: cysteine 177-cysteine 207 and cysteine 190-cysteine 201.

This sequence belongs to the RNase T2 family.

The protein localises to the secreted. It is found in the extracellular space. The catalysed reaction is a ribonucleotidyl-ribonucleotide-RNA + H2O = a 3'-end 3'-phospho-ribonucleotide-RNA + a 5'-end dephospho-ribonucleoside-RNA + H(+). In terms of biological role, self-incompatibility (SI) is the inherited ability of a flowering plant to prevent self-fertilization by discriminating between self and non-self pollen during pollination. In many species of the Solanaceae, self-incompatibility is controlled by the single, multiallelic locus S. This stylar glycoprotein is associated with expression of self-incompatibility in potato. The chain is Ribonuclease S-7 from Nicotiana alata (Winged tobacco).